The following is a 76-amino-acid chain: Exodeoxyribonuclease 7 small subunit (76 aa).

The protein belongs to the XseB family. As to quaternary structure, heterooligomer composed of large and small subunits.

Its subcellular location is the cytoplasm. The catalysed reaction is Exonucleolytic cleavage in either 5'- to 3'- or 3'- to 5'-direction to yield nucleoside 5'-phosphates.. In terms of biological role, bidirectionally degrades single-stranded DNA into large acid-insoluble oligonucleotides, which are then degraded further into small acid-soluble oligonucleotides. In Staphylococcus aureus (strain Mu3 / ATCC 700698), this protein is Exodeoxyribonuclease 7 small subunit.